The primary structure comprises 257 residues: Glutamate racemase (257 aa).

Residues 12–13 (DS) and 44–45 (YG) contribute to the substrate site. Cysteine 75 (proton donor/acceptor) is an active-site residue. Substrate is bound at residue 76 to 77 (NT). Cysteine 185 serves as the catalytic Proton donor/acceptor. Substrate is bound at residue 186–187 (TH).

It belongs to the aspartate/glutamate racemases family.

It carries out the reaction L-glutamate = D-glutamate. The protein operates within cell wall biogenesis; peptidoglycan biosynthesis. In terms of biological role, provides the (R)-glutamate required for cell wall biosynthesis. The chain is Glutamate racemase from Clostridium botulinum (strain Langeland / NCTC 10281 / Type F).